The primary structure comprises 464 residues: MAVGKVKQIVGPTLDIEFPPGQLPNILNAIKIIDPKDQRELIAEVAMHLGDNQVRCIALSSTDGLVREAQAVDTEAPISIPVGSPTLGRLLNVLGQPIDEMGAIENAEISPIHKASPTFEEQDTQGVIFETGIKVIDLLCPYTKGGKVGLFGGAGVGKSVIVMELIHNIATHHGGYSVFCGIGERTREGNDLWLEMKESGILSKTSLVFGQMNEPPGARMRVGLTGLTMAEHFRDQEHQNVLLFIDNIFRFVQAGSEVSALLGRMPSAVGYQPTLASEIGSLQERITSTKHGSITSVQAIYVPADDYTDPAPASIFPHLDAATTLSRQIAELGIYPAVDPLNSSSRILDPHVLGEEHYQVARQVQKVLQRYKDLQDIIAILGIDELSEEDQLTVSRARRIQKFLSQPFFVAETFTGKKGRFVKLPDTIKGFKMIVEGEMDNIPEQAFYMVGTIEEVFEKAEQMK.

152-159 (GGAGVGKS) is an ATP binding site.

It belongs to the ATPase alpha/beta chains family. In terms of assembly, F-type ATPases have 2 components, CF(1) - the catalytic core - and CF(0) - the membrane proton channel. CF(1) has five subunits: alpha(3), beta(3), gamma(1), delta(1), epsilon(1). CF(0) has three main subunits: a(1), b(2) and c(9-12). The alpha and beta chains form an alternating ring which encloses part of the gamma chain. CF(1) is attached to CF(0) by a central stalk formed by the gamma and epsilon chains, while a peripheral stalk is formed by the delta and b chains.

It is found in the cell membrane. It carries out the reaction ATP + H2O + 4 H(+)(in) = ADP + phosphate + 5 H(+)(out). Its function is as follows. Produces ATP from ADP in the presence of a proton gradient across the membrane. The catalytic sites are hosted primarily by the beta subunits. In Protochlamydia amoebophila (strain UWE25), this protein is ATP synthase subunit beta.